A 377-amino-acid polypeptide reads, in one-letter code: Alkane 1-monooxygenase 2 (377 aa).

The next 4 helical transmembrane spans lie at 17-37, 43-63, 87-107, and 116-136; these read GYWIWLIAVLGIPLSYWWSLG, AWPWLVISVVFGLIPILDAIV, VLSLATVPLLLGMLVWSGWIL, and VGQLGWILSVGTVMGAIGITV. Fe cation-binding residues include His-138, His-142, His-168, His-172, and His-173. The chain crosses the membrane as a helical span at residues 236-256; that stretch reads ALFLLGFSLAFGWLGAIFFLG. Fe cation contacts are provided by His-312, His-315, and His-316.

This sequence belongs to the fatty acid desaturase type 1 family. AlkB subfamily. It depends on Fe(3+) as a cofactor.

Its subcellular location is the cell inner membrane. It catalyses the reaction octane + 2 reduced [rubredoxin] + O2 + 2 H(+) = 2 oxidized [rubredoxin] + octan-1-ol + H2O. It functions in the pathway hydrocarbon metabolism; alkane degradation. In terms of biological role, catalyzes the hydroxylation of n-alkanes in the presence of a NADH-rubredoxin reductase and rubredoxin. It preferably hydroxylases C12-C20 hydrocarbons. The chain is Alkane 1-monooxygenase 2 (alkB2) from Pseudomonas aeruginosa (strain ATCC 15692 / DSM 22644 / CIP 104116 / JCM 14847 / LMG 12228 / 1C / PRS 101 / PAO1).